The chain runs to 583 residues: MPVTDRSVPSLLQERADQQPDSTAYTYIDYGSDPKGFADSLTWSQVYSRACIIAEELKLCGLPGDRVAVLAPQGLEYVLAFLGALQAGFIAVPLSTPQYGIHDDRVSAVLQDSKPVAILTTSSVVGDVTKYAASHDGQPAPVVVEVDLLDLDSPRQMPAFSRQHTGAAYLQYTSGSTRTPAGVIVSHTNVIANVTQSMYGYFGDPAKIPTGTVVSWLPLYHDMGLILGICAPLVARRRAVLMSPMSFLRRPARWMQLLATSGRCFSAAPNFAFELAVRRTSDQDMAGLDLRDVVGIVSGSERIHVATVRRFIERFAPYNLSPTAIRPSYGLAEATLYVAAPEAGAAPKTVRFDYEQLTAGQARPCGTDGSVGTELISYGSPDPSSVRIVNPETMVENPPGVVGEIWVHGDHVTMGYWQKPKQTAQVFDAKLVDPAPAAPEGPWLRTGDLGVISDGELFIMGRIKDLLIVDGRNHYPDDIEATIQEITGGRAAAIAVPDDITEQLVAIIEFKRRGSTAEEVMLKLRSVKREVTSAISKSHSLRVADLVLVSPGSIPITTSGKIRRSACVERYRSDGFKRLDVAV.

It belongs to the ATP-dependent AMP-binding enzyme family.

It catalyses the reaction holo-[(phenol)carboxyphthiodiolenone synthase] + a long-chain fatty acid + ATP = a long-chain fatty acyl-[(phenol)carboxyphthiodiolenone synthase] + AMP + diphosphate. The catalysed reaction is eicosanoate + holo-[(phenol)carboxyphthiodiolenone synthase] + ATP = icosanoyl-[(phenol)carboxyphthiodiolenone synthase] + AMP + diphosphate. The enzyme catalyses holo-[(phenol)carboxyphthiodiolenone synthase] + docosanoate + ATP = docosanoyl-[(phenol)carboxyphthiodiolenone synthase] + AMP + diphosphate. It participates in lipid metabolism; fatty acid biosynthesis. Catalyzes the activation of long-chain fatty acids as acyl-adenylates (acyl-AMP), which are then transferred to the multifunctional polyketide synthase PpsA for further chain extension. Catalyzes the adenylation of the long-chain fatty acids eicosanoate (C20) or docosanoate (C22), and potentially the very-long-chain fatty acid lignocerate (C24). Involved in the biosynthesis of phthiocerol dimycocerosate (DIM A) and phthiodiolone dimycocerosate (DIM B). This is Long-chain-fatty-acid--AMP ligase FadD26 (fadD26) from Mycobacterium bovis (strain ATCC BAA-935 / AF2122/97).